A 182-amino-acid chain; its full sequence is Adenine phosphoribosyltransferase (182 aa).

This sequence belongs to the purine/pyrimidine phosphoribosyltransferase family. In terms of assembly, homodimer.

Its subcellular location is the cytoplasm. It catalyses the reaction AMP + diphosphate = 5-phospho-alpha-D-ribose 1-diphosphate + adenine. Its pathway is purine metabolism; AMP biosynthesis via salvage pathway; AMP from adenine: step 1/1. Its function is as follows. Catalyzes a salvage reaction resulting in the formation of AMP, that is energically less costly than de novo synthesis. The polypeptide is Adenine phosphoribosyltransferase (Shewanella frigidimarina (strain NCIMB 400)).